Reading from the N-terminus, the 124-residue chain is Acidic phospholipase A2 (124 aa).

7 disulfide bridges follow: cysteine 26-cysteine 116, cysteine 28-cysteine 44, cysteine 43-cysteine 95, cysteine 49-cysteine 124, cysteine 50-cysteine 88, cysteine 57-cysteine 81, and cysteine 75-cysteine 86. Residues tyrosine 27, glycine 29, and glycine 31 each coordinate Ca(2+). Histidine 47 is an active-site residue. Residue aspartate 48 coordinates Ca(2+). Residue aspartate 89 is part of the active site.

It belongs to the phospholipase A2 family. Group II subfamily. D49 sub-subfamily. In terms of assembly, monomer. Ca(2+) is required as a cofactor. As to expression, expressed by the venom gland.

Its subcellular location is the secreted. The catalysed reaction is a 1,2-diacyl-sn-glycero-3-phosphocholine + H2O = a 1-acyl-sn-glycero-3-phosphocholine + a fatty acid + H(+). In terms of biological role, snake venom phospholipase A2 (PLA2) that acts in vivo as an anti-thrombotic agent. Inhibits platelet aggregation induced by ADP, arachidonic acid, and thrombin. PLA2 catalyzes the calcium-dependent hydrolysis of the 2-acyl groups in 3-sn-phosphoglycerides. The polypeptide is Acidic phospholipase A2 (Gloydius halys (Chinese water mocassin)).